Here is a 365-residue protein sequence, read N- to C-terminus: tRNA N6-adenosine threonylcarbamoyltransferase (365 aa).

Fe cation-binding residues include His-119 and His-123. Substrate is bound by residues 141 to 145 (LVSGG), Asp-174, Gly-187, and Asn-288. A Fe cation-binding site is contributed by Asp-316.

The protein belongs to the KAE1 / TsaD family. Requires Fe(2+) as cofactor.

The protein resides in the cytoplasm. The enzyme catalyses L-threonylcarbamoyladenylate + adenosine(37) in tRNA = N(6)-L-threonylcarbamoyladenosine(37) in tRNA + AMP + H(+). Functionally, required for the formation of a threonylcarbamoyl group on adenosine at position 37 (t(6)A37) in tRNAs that read codons beginning with adenine. Is involved in the transfer of the threonylcarbamoyl moiety of threonylcarbamoyl-AMP (TC-AMP) to the N6 group of A37, together with TsaE and TsaB. TsaD likely plays a direct catalytic role in this reaction. This Rhizobium etli (strain ATCC 51251 / DSM 11541 / JCM 21823 / NBRC 15573 / CFN 42) protein is tRNA N6-adenosine threonylcarbamoyltransferase.